The sequence spans 485 residues: Glutamyl-tRNA(Gln) amidotransferase subunit A (485 aa).

Active-site charge relay system residues include lysine 74 and serine 149. Serine 173 serves as the catalytic Acyl-ester intermediate.

This sequence belongs to the amidase family. GatA subfamily. As to quaternary structure, heterotrimer of A, B and C subunits.

It catalyses the reaction L-glutamyl-tRNA(Gln) + L-glutamine + ATP + H2O = L-glutaminyl-tRNA(Gln) + L-glutamate + ADP + phosphate + H(+). Functionally, allows the formation of correctly charged Gln-tRNA(Gln) through the transamidation of misacylated Glu-tRNA(Gln) in organisms which lack glutaminyl-tRNA synthetase. The reaction takes place in the presence of glutamine and ATP through an activated gamma-phospho-Glu-tRNA(Gln). In Synechococcus sp. (strain RCC307), this protein is Glutamyl-tRNA(Gln) amidotransferase subunit A.